Consider the following 302-residue polypeptide: Sulfate adenylyltransferase subunit 2 (302 aa).

This sequence belongs to the PAPS reductase family. CysD subfamily. As to quaternary structure, heterodimer composed of CysD, the smaller subunit, and CysN.

It carries out the reaction sulfate + ATP + H(+) = adenosine 5'-phosphosulfate + diphosphate. It functions in the pathway sulfur metabolism; hydrogen sulfide biosynthesis; sulfite from sulfate: step 1/3. In terms of biological role, with CysN forms the ATP sulfurylase (ATPS) that catalyzes the adenylation of sulfate producing adenosine 5'-phosphosulfate (APS) and diphosphate, the first enzymatic step in sulfur assimilation pathway. APS synthesis involves the formation of a high-energy phosphoric-sulfuric acid anhydride bond driven by GTP hydrolysis by CysN coupled to ATP hydrolysis by CysD. The polypeptide is Sulfate adenylyltransferase subunit 2 (Escherichia coli O1:K1 / APEC).